Consider the following 39-residue polypeptide: Cytochrome b559 subunit beta (39 aa).

A helical membrane pass occupies residues 14–30 (WLAVHGLAVPTVFFLGS). A heme-binding site is contributed by histidine 18.

This sequence belongs to the PsbE/PsbF family. In terms of assembly, heterodimer of an alpha subunit and a beta subunit. PSII is composed of 1 copy each of membrane proteins PsbA, PsbB, PsbC, PsbD, PsbE, PsbF, PsbH, PsbI, PsbJ, PsbK, PsbL, PsbM, PsbT, PsbX, PsbY, PsbZ, Psb30/Ycf12, at least 3 peripheral proteins of the oxygen-evolving complex and a large number of cofactors. It forms dimeric complexes. It depends on heme b as a cofactor.

The protein resides in the plastid. The protein localises to the chloroplast thylakoid membrane. Its function is as follows. This b-type cytochrome is tightly associated with the reaction center of photosystem II (PSII). PSII is a light-driven water:plastoquinone oxidoreductase that uses light energy to abstract electrons from H(2)O, generating O(2) and a proton gradient subsequently used for ATP formation. It consists of a core antenna complex that captures photons, and an electron transfer chain that converts photonic excitation into a charge separation. This is Cytochrome b559 subunit beta from Pinus koraiensis (Korean pine).